Consider the following 159-residue polypeptide: Ribosome maturation factor RimP (159 aa).

It belongs to the RimP family.

The protein resides in the cytoplasm. Its function is as follows. Required for maturation of 30S ribosomal subunits. This is Ribosome maturation factor RimP from Halothermothrix orenii (strain H 168 / OCM 544 / DSM 9562).